The primary structure comprises 462 residues: Glycoprotein endo-alpha-1,2-mannosidase (462 aa).

Residues Met1–Cys9 are Cytoplasmic-facing. A helical; Signal-anchor for type II membrane protein transmembrane segment spans residues Ile10 to Trp30. Over Pro31 to Ser462 the chain is Lumenal. Residues Asp60–Ser462 form a catalytic region.

It belongs to the glycosyl hydrolase 99 family. In terms of processing, undergoes proteolytic cleavage in the C-terminal region. Highly expressed in the liver and kidney.

The protein localises to the golgi apparatus membrane. The enzyme catalyses N-{alpha-Glc-(1-&gt;3)-alpha-Man-(1-&gt;2)-alpha-Man-(1-&gt;2)-alpha-Man-(1-&gt;3)-[alpha-Man-(1-&gt;2)-alpha-Man-(1-&gt;3)-[alpha-Man-(1-&gt;2)-alpha-Man-(1-&gt;6)]-alpha-Man-(1-&gt;6)]-beta-Man-(1-&gt;4)-beta-GlcNAc-(1-&gt;4)-beta-GlcNAc}-L-asparaginyl-[protein] + H2O = alpha-D-glucosyl-(1-&gt;3)-D-mannopyranose + N(4)-{alpha-D-Man-(1-&gt;2)-alpha-D-Man-(1-&gt;3)-[alpha-D-Man-(1-&gt;2)-alpha-D-Man-(1-&gt;3)-[alpha-D-Man-(1-&gt;2)-alpha-D-Man-(1-&gt;6)]-alpha-D-Man-(1-&gt;6)]-beta-D-Man-(1-&gt;4)-beta-D-GlaNAc-(1-&gt;4)-beta-D-GlcNAc}-L-asparaginyl-[protein] (N-glucan mannose isomer 8A1,2,3B1,2). The sequence is that of Glycoprotein endo-alpha-1,2-mannosidase (Manea) from Rattus norvegicus (Rat).